Reading from the N-terminus, the 504-residue chain is Probable ergothioneine transporter EgtUBC (504 aa).

The region spanning 19-198 is the ABC transmembrane type-1 domain; that stretch reads MIEHIQISFI…LLAIIFDLIL (180 aa). Helical transmembrane passes span 25-45, 49-69, 70-90, 145-165, 178-198, and 209-229; these read ISFI…ILLT, TISE…SLAL, LGLM…ALVV, AMVL…GGLG, SLIL…DLIL, and LLMT…IPMF. The ergothioneine binding domain stretch occupies residues 231 to 504; the sequence is QKGDKITLAG…DYLKAKGLIK (274 aa).

The protein in the N-terminal section; belongs to the binding-protein-dependent transport system permease family. This sequence in the C-terminal section; belongs to the OsmX family. The complex is probably composed of at least an ATP-binding protein (EgtUA) and a transmembrane protein (EgtUBC).

It is found in the membrane. In terms of biological role, part of an ABC transporter complex EgtU required for the uptake of ergothioneine (EGT), a natural low-molecular weight (LMW) thiol antioxidant. Responsible for the translocation of the substrate across the membrane. Also contains a C-terminal periplasmic solute-binding domain (SBD) which binds to EGT with sub-micromolar affinity. Probably does not bind L-hercynine. This is Probable ergothioneine transporter EgtUBC (egtUBC) from Staphylococcus aureus (strain USA300).